The sequence spans 132 residues: Secreted RxLR effector protein RXLR-C22 (132 aa).

The first 21 residues, 1–21, serve as a signal peptide directing secretion; that stretch reads MRSLVWAVIATLIVLTPFSEA. Residues 56-74 carry the RxLR-dEER motif; that stretch reads RKLQSDSVKKGDSTGLEER. A glycan (N-linked (GlcNAc...) asparagine) is linked at Asn116.

It belongs to the RxLR effector family.

Its subcellular location is the secreted. It localises to the host Golgi apparatus. In terms of biological role, secreted effector that does not suppress pattern-triggered immunity (PTI) in plant host. The protein is Secreted RxLR effector protein RXLR-C22 of Plasmopara halstedii (Downy mildew of sunflower).